The primary structure comprises 396 residues: Acetate kinase (396 aa).

A Mg(2+)-binding site is contributed by Asn7. Position 14 (Lys14) interacts with ATP. Arg86 is a substrate binding site. Asp143 serves as the catalytic Proton donor/acceptor. Residues 203-207 (HLGNG), 277-279 (DMR), and 325-329 (GIGEH) each bind ATP. Glu380 serves as a coordination point for Mg(2+).

Belongs to the acetokinase family. Homodimer. Requires Mg(2+) as cofactor. Mn(2+) is required as a cofactor.

The protein localises to the cytoplasm. The catalysed reaction is acetate + ATP = acetyl phosphate + ADP. Its pathway is metabolic intermediate biosynthesis; acetyl-CoA biosynthesis; acetyl-CoA from acetate: step 1/2. Functionally, catalyzes the formation of acetyl phosphate from acetate and ATP. Can also catalyze the reverse reaction. The polypeptide is Acetate kinase (Sulfurovum sp. (strain NBC37-1)).